We begin with the raw amino-acid sequence, 316 residues long: Holliday junction branch migration complex subunit RuvB (316 aa).

The tract at residues methionine 1–tyrosine 165 is large ATPase domain (RuvB-L). ATP is bound by residues arginine 5, glycine 46, lysine 49, threonine 50, serine 51, glutamate 112–phenylalanine 114, arginine 155, tyrosine 165, and arginine 202. Threonine 50 contributes to the Mg(2+) binding site. Residues asparagine 166–aspartate 236 form a small ATPAse domain (RuvB-S) region. Residues glutamate 239–tryptophan 316 form a head domain (RuvB-H) region. DNA is bound by residues lysine 294 and arginine 299.

This sequence belongs to the RuvB family. Homohexamer. Forms an RuvA(8)-RuvB(12)-Holliday junction (HJ) complex. HJ DNA is sandwiched between 2 RuvA tetramers; dsDNA enters through RuvA and exits via RuvB. An RuvB hexamer assembles on each DNA strand where it exits the tetramer. Each RuvB hexamer is contacted by two RuvA subunits (via domain III) on 2 adjacent RuvB subunits; this complex drives branch migration. In the full resolvosome a probable DNA-RuvA(4)-RuvB(12)-RuvC(2) complex forms which resolves the HJ.

Its subcellular location is the cytoplasm. It carries out the reaction ATP + H2O = ADP + phosphate + H(+). In terms of biological role, the RuvA-RuvB-RuvC complex processes Holliday junction (HJ) DNA during genetic recombination and DNA repair, while the RuvA-RuvB complex plays an important role in the rescue of blocked DNA replication forks via replication fork reversal (RFR). RuvA specifically binds to HJ cruciform DNA, conferring on it an open structure. The RuvB hexamer acts as an ATP-dependent pump, pulling dsDNA into and through the RuvAB complex. RuvB forms 2 homohexamers on either side of HJ DNA bound by 1 or 2 RuvA tetramers; 4 subunits per hexamer contact DNA at a time. Coordinated motions by a converter formed by DNA-disengaged RuvB subunits stimulates ATP hydrolysis and nucleotide exchange. Immobilization of the converter enables RuvB to convert the ATP-contained energy into a lever motion, pulling 2 nucleotides of DNA out of the RuvA tetramer per ATP hydrolyzed, thus driving DNA branch migration. The RuvB motors rotate together with the DNA substrate, which together with the progressing nucleotide cycle form the mechanistic basis for DNA recombination by continuous HJ branch migration. Branch migration allows RuvC to scan DNA until it finds its consensus sequence, where it cleaves and resolves cruciform DNA. The sequence is that of Holliday junction branch migration complex subunit RuvB from Mycoplasmopsis synoviae (strain 53) (Mycoplasma synoviae).